The chain runs to 238 residues: MADS-box protein 04g005320 (238 aa).

An MADS-box domain is found at 1 to 61 (MGRGKVELKR…GKLYEFCSTS (61 aa)). The K-box domain occupies 87 to 177 (SQNNYQEYMK…KTKLEENSVA (91 aa)).

It is found in the nucleus. In terms of biological role, probable MADS-box transcription factor that functions with J2 and EJ2 in meristem maturation. This chain is MADS-box protein 04g005320, found in Solanum lycopersicum (Tomato).